A 172-amino-acid chain; its full sequence is MRIYKDIITGDEMFSDTYKVKLVDEVIYEVTGKLVSRTQGDIQIDGFNPSAEEADEGTDSNVETGVDIVLNHRLVETYAFGDKKSYTLYLKDYMKKLVAKLEEKAPDQVDIFKTNMNKVMKDILARFKELQFFTGESMDCDGMVAMMEYRKVDETEIPIMMFFKHGLEEEKF.

Residues 1-172 (MRIYKDIITG…FKHGLEEEKF (172 aa)) form the TCTP domain.

This sequence belongs to the TCTP family.

It localises to the cytoplasm. Functionally, involved in calcium binding and microtubule stabilization. The chain is Translationally-controlled tumor protein homolog (Tctp) from Lonomia obliqua (Moth).